The primary structure comprises 146 residues: 3-hydroxyacyl-[acyl-carrier-protein] dehydratase FabZ (146 aa).

Residue His-49 is part of the active site.

It belongs to the thioester dehydratase family. FabZ subfamily.

The protein localises to the cytoplasm. The catalysed reaction is a (3R)-hydroxyacyl-[ACP] = a (2E)-enoyl-[ACP] + H2O. Involved in unsaturated fatty acids biosynthesis. Catalyzes the dehydration of short chain beta-hydroxyacyl-ACPs and long chain saturated and unsaturated beta-hydroxyacyl-ACPs. This is 3-hydroxyacyl-[acyl-carrier-protein] dehydratase FabZ from Wolbachia sp. subsp. Brugia malayi (strain TRS).